Reading from the N-terminus, the 829-residue chain is Isethionate sulfite-lyase (829 aa).

The PFL domain maps to 31-699 (ERVFNILDSF…VVSATPNGRL (669 aa)). 2-hydroxyethane-1-sulfonate is bound by residues arginine 188, glutamine 192, 467–469 (CTE), and arginine 677. Residue cysteine 467 is the Cysteine radical intermediate of the active site. Catalysis depends on glutamate 469, which acts as the Proton acceptor. In terms of domain architecture, Glycine radical spans 706-829 (DGSSASHGAD…LIARTQHDAM (124 aa)). Glycine 804 bears the Glycine radical mark.

It belongs to the glycyl radical enzyme (GRE) family. In terms of assembly, homodimer. In terms of processing, requires the activating protein IslB to generate the key active site glycyl radical on Gly-804 that is involved in catalysis.

It catalyses the reaction 2-hydroxyethane-1-sulfonate = acetaldehyde + sulfite + H(+). The protein operates within organosulfur degradation; alkanesulfonate degradation. Functionally, involved in an anaerobic respiration pathway that converts the sulfonate isethionate (2-hydroxyethanesulfonate) to ammonia, acetate and sulfide. Catalyzes the radical-mediated C-S bond cleavage of isethionate (2-hydroxyethanesulfonate) to form sulfite and acetaldehyde. In Oleidesulfovibrio alaskensis (strain ATCC BAA-1058 / DSM 17464 / G20) (Desulfovibrio alaskensis), this protein is Isethionate sulfite-lyase.